A 244-amino-acid polypeptide reads, in one-letter code: Ethylene-responsive transcription factor ERF013 (244 aa).

The segment at 1-33 (MVKQELKIQVTTSSSSLSHSSSSSSSSTSALRH) is disordered. Residues 11–29 (TTSSSSLSHSSSSSSSSTS) show a composition bias toward low complexity. Residues 42–99 (KYKGVRMRSWGSWVTEIRAPNQKTRIWLGSYSTAEAAARAYDAALLCLKGPKANLNFP) constitute a DNA-binding region (AP2/ERF). A disordered region spans residues 123–178 (QKVAAQAANSSSDHFTPPSDENDHDHDDGLDHHPSASSSAASSPPDDDHHNDDDGD). The span at 143-156 (ENDHDHDDGLDHHP) shows a compositional bias: basic and acidic residues. Low complexity predominate over residues 157 to 166 (SASSSAASSP).

This sequence belongs to the AP2/ERF transcription factor family. ERF subfamily.

It localises to the nucleus. Functionally, probably acts as a transcriptional activator. Binds to the GCC-box pathogenesis-related promoter element. May be involved in the regulation of gene expression by stress factors and by components of stress signal transduction pathways. The protein is Ethylene-responsive transcription factor ERF013 (ERF013) of Arabidopsis thaliana (Mouse-ear cress).